Here is a 137-residue protein sequence, read N- to C-terminus: uncharacterized protein (137 aa).

The helical transmembrane segment at 116–136 (YLSIANLATLLLFGIIGLSII) threads the bilayer.

It localises to the host membrane. This is an uncharacterized protein from His1 virus (isolate Australia/Victoria) (His1V).